The chain runs to 670 residues: Transketolase (670 aa).

His-31 is a binding site for substrate. Residues His-71 and 120–122 each bind thiamine diphosphate; that span reads GPL. Mg(2+) is bound at residue Asp-161. Positions 162 and 191 each coordinate thiamine diphosphate. Mg(2+) contacts are provided by Asn-191 and Ile-193. Substrate contacts are provided by His-268, Arg-362, and Ser-389. His-268 serves as a coordination point for thiamine diphosphate. Glu-416 acts as the Proton donor in catalysis. Residue Phe-443 participates in thiamine diphosphate binding. His-467, Asp-475, and Arg-528 together coordinate substrate.

In terms of assembly, homodimer. Requires Mg(2+) as cofactor. Ca(2+) is required as a cofactor. The cofactor is Mn(2+). It depends on Co(2+) as a cofactor. Thiamine diphosphate serves as cofactor.

The catalysed reaction is D-sedoheptulose 7-phosphate + D-glyceraldehyde 3-phosphate = aldehydo-D-ribose 5-phosphate + D-xylulose 5-phosphate. Catalyzes the transfer of a two-carbon ketol group from a ketose donor to an aldose acceptor, via a covalent intermediate with the cofactor thiamine pyrophosphate. The chain is Transketolase (tkt) from Nostoc sp. (strain PCC 7120 / SAG 25.82 / UTEX 2576).